A 342-amino-acid chain; its full sequence is Phomopsin biosynthesis cluster protein B (342 aa).

Positions 1–22 (MESIAKAKSLPNKGRTYDSQRP) are disordered. The chain crosses the membrane as a helical span at residues 87–107 (VLIIGCAVISLFAIIGALGFA). Residues 118–186 (CASPAHQNPH…QCGESPDEAQ (69 aa)) are disordered. The segment covering 144–155 (HSGSHSSSSSTN) has biased composition (low complexity). N-linked (GlcNAc...) asparagine glycosylation is present at Asn-248.

The protein localises to the membrane. Its function is as follows. Part of the gene cluster that mediates the biosynthesis of the phomopsins, a group of hexapeptide mycotoxins which infects lupins and causes lupinosis disease in livestock. The role of phomB within the phomopsins biosynthesis pathway has still to be determined. The pathway starts with the processing of the precursor phomA by several endopeptidases including kexin proteases as well as the cluster-specific S41 family peptidase phomP1 and the oligopeptidase phomG to produce 10 identical copies of the hexapeptide Tyr-Val-Ile-Pro-Ile-Asp. After being excised from the precursor peptide, the core peptides are cyclized and modified post-translationally by enzymes encoded within the gene cluster. The timing and order of proteolysis of the phomA precursor and PTMs are still unknown. Two tyrosinase-like enzymes, phomQ1 and phomQ2, catalyze the chlorination and hydroxylation of Tyr, respectively. PhomYb, is proposed to be involved in the construction of the macrocyclic structure. The other 4 ustYa family proteins may be involved in PTMs that generate the unique structure of phomopsin A. PhomYa is required for the hydroxylation of C-beta of Tyr. PhomYc, phomYd, and phomYe are responsible for the biosynthesis of 2,3-dehydroisoleucine (dIle), 2,3-dehydroaspartic acid (dAsp), and 3,4-dehydroproline (dPro), respectively. While dIle formation by phomYc is indispensable for the installation of dAsp by phomYd, the order of the other PTMs have not been elucidated yet. Most of the biosynthetic enzymes likely have broad substrate specificity, and thus, there might be a metabolic grid from a precursor to phomopsin A. The enzyme(s) responsible for the biosynthesis of 3,4-dehydrovaline (dVal) have also not been identified yet. Finally, phomM acts as an S-adenosylmethionine-dependent alpha-N-methyltransferase that catalyzes two successive N-methylation reactions, converting N-desmethyl-phomopsin A to phomopsin A and phomopsin A further to an N,N-dimethylated congener called phomopsin E. In Diaporthe leptostromiformis (Lupinosis disease fungus), this protein is Phomopsin biosynthesis cluster protein B.